Here is a 319-residue protein sequence, read N- to C-terminus: Phospho-N-acetylmuramoyl-pentapeptide-transferase (319 aa).

Transmembrane regions (helical) follow at residues 5–25 (LIPFISSFALTVIFLPLFIGF), 51–71 (TMGGVVFMLASVISTLWVLIW), 79–99 (TWILIIAFLGYGIIGFLDDGI), 116–136 (LGQIIIAALIIALAFSDHFAF), 149–169 (SFLFSLFVLFWLVGFSNAVNL), 172–192 (GLDGLATGLSIIAYATYAWIA), 197–217 (NWVIVAFTLSVIGGLVGFFIF), 224–244 (IFMGDAGSLALGGGLATVSIF), 252–272 (LLIGIVFVLETLSVILQVISF), and 299–319 (VDIVFWIVGLIGSIIYLIIWG).

Belongs to the glycosyltransferase 4 family. MraY subfamily. It depends on Mg(2+) as a cofactor.

It localises to the cell membrane. It catalyses the reaction UDP-N-acetyl-alpha-D-muramoyl-L-alanyl-gamma-D-glutamyl-L-lysyl-D-alanyl-D-alanine + di-trans,octa-cis-undecaprenyl phosphate = Mur2Ac(oyl-L-Ala-gamma-D-Glu-L-Lys-D-Ala-D-Ala)-di-trans,octa-cis-undecaprenyl diphosphate + UMP. It functions in the pathway cell wall biogenesis; peptidoglycan biosynthesis. Catalyzes the initial step of the lipid cycle reactions in the biosynthesis of the cell wall peptidoglycan: transfers peptidoglycan precursor phospho-MurNAc-pentapeptide from UDP-MurNAc-pentapeptide onto the lipid carrier undecaprenyl phosphate, yielding undecaprenyl-pyrophosphoryl-MurNAc-pentapeptide, known as lipid I. This chain is Phospho-N-acetylmuramoyl-pentapeptide-transferase, found in Lactobacillus gasseri (strain ATCC 33323 / DSM 20243 / BCRC 14619 / CIP 102991 / JCM 1131 / KCTC 3163 / NCIMB 11718 / NCTC 13722 / AM63).